We begin with the raw amino-acid sequence, 238 residues long: Ankyrin repeat domain-containing protein 49 (238 aa).

S48 is subject to Phosphoserine. ANK repeat units follow at residues 77 to 105, 106 to 135, 139 to 168, and 172 to 205; these read LLWA…TRDE, DKYT…DVHA, DGWT…DVNA, and GLLT…GLKN.

It localises to the nucleus. May have a role in spermatogenesis where it promotes autophagy in response to serum starvation, via the NF-kappaB pathway. The chain is Ankyrin repeat domain-containing protein 49 (ANKRD49) from Bos taurus (Bovine).